The primary structure comprises 676 residues: E3 ubiquitin-protein ligase ICP0 (676 aa).

The RING-type zinc-finger motif lies at 13 to 52; that stretch reads CCICLDAITGAARALPCLHAFCLACIRRWLEGRPTCPLCK. 3 disordered regions span residues 101 to 135, 266 to 486, and 555 to 676; these read DLTA…EAAG, HLIP…PAPI, and AAIS…AWRQ. Gly residues predominate over residues 110 to 135; the sequence is PGAGGEAGAAGGSEAGGGAGGAEAAG. Residues 286-303 are compositionally biased toward acidic residues; sequence SDSDSEGSEDDSWSESEE. Residues 304–314 show a composition bias toward low complexity; it reads SSSGLSTSDLT. Over residues 315 to 328 the composition is skewed to acidic residues; that stretch reads AIDDTETEPETDAE. A compositionally biased stretch (polar residues) spans 351–361; the sequence is YVSTRGRQTPA. Low complexity-rich tracts occupy residues 375–388 and 397–411; these read GRAA…SSRS and LPAA…QARA. The segment covering 422-439 has biased composition (gly residues); the sequence is GAGLGVAAGETAGWGVGS. Residues 440–450 show a composition bias toward basic and acidic residues; the sequence is EEGRGERRAKL. Positions 474–484 are enriched in pro residues; the sequence is TPAPAPAPAPA. The span at 555-597 shows a compositional bias: low complexity; the sequence is AAISTRAPTPSPAGRAPAADPRRAGAPALAGAARAEAGRNGNP.

In terms of processing, auto-ubiquitinated. The strongly acidic region might serve as a transcriptional activation domain, possibly regulated through phosphorylation by casein kinase II.

It carries out the reaction S-ubiquitinyl-[E2 ubiquitin-conjugating enzyme]-L-cysteine + [acceptor protein]-L-lysine = [E2 ubiquitin-conjugating enzyme]-L-cysteine + N(6)-ubiquitinyl-[acceptor protein]-L-lysine.. In terms of biological role, evades nuclear antiviral defenses triggered by dsDNA viruses. Acts during the initial stages of lytic infection and the reactivation of latent viral genome. Prevents the antiviral effect of nuclear bodies by degrading host PML and SP100. The protein is E3 ubiquitin-protein ligase ICP0 (BICP0) of Bos taurus (Bovine).